The chain runs to 52 residues: Large ribosomal subunit protein eL39 (52 aa).

This sequence belongs to the eukaryotic ribosomal protein eL39 family.

This chain is Large ribosomal subunit protein eL39, found in Desulfurococcus amylolyticus (strain DSM 18924 / JCM 16383 / VKM B-2413 / 1221n) (Desulfurococcus kamchatkensis).